The following is a 289-amino-acid chain: RNA-binding protein CP31B, chloroplastic (289 aa).

The N-terminal 71 residues, 1–71 (MTSSVLTPSL…NSSPVVTFVS (71 aa)), are a transit peptide targeting the chloroplast. 2 consecutive RRM domains span residues 113–191 (AKLF…RAAP) and 207–285 (FRIY…VAEE).

ADP-ribosylated by the Pseudomonas syringae type III effector HopU1. ADP-ribosylation reduces the ability of the protein to bind RNA.

It is found in the plastid. The protein resides in the chloroplast. Required for specific RNA editing events in chloroplasts and stabilizes specific chloroplast mRNAs. This chain is RNA-binding protein CP31B, chloroplastic, found in Arabidopsis thaliana (Mouse-ear cress).